The sequence spans 224 residues: Holliday junction branch migration complex subunit RuvA (224 aa).

Residues 1–64 are domain I; sequence MIGKVAGILD…EDLLQLFGFP (64 aa). Residues 65–143 are domain II; that stretch reads TMIEKEWHRL…ALMAMGGGTA (79 aa). Residues 141–185 form a disordered region; that stretch reads GTAALAPSEPPEPQPGTSSGSRRKTRAPEPPRPSHTADALSALAN. A flexible linker region spans residues 144–170; it reads ALAPSEPPEPQPGTSSGSRRKTRAPEP. The segment at 171–224 is domain III; that stretch reads PRPSHTADALSALANLGYQPTDAAQAVAQAAGESPDADTAALIRAALKLLAPKS.

It belongs to the RuvA family. In terms of assembly, homotetramer. Forms an RuvA(8)-RuvB(12)-Holliday junction (HJ) complex. HJ DNA is sandwiched between 2 RuvA tetramers; dsDNA enters through RuvA and exits via RuvB. An RuvB hexamer assembles on each DNA strand where it exits the tetramer. Each RuvB hexamer is contacted by two RuvA subunits (via domain III) on 2 adjacent RuvB subunits; this complex drives branch migration. In the full resolvosome a probable DNA-RuvA(4)-RuvB(12)-RuvC(2) complex forms which resolves the HJ.

Its subcellular location is the cytoplasm. Functionally, the RuvA-RuvB-RuvC complex processes Holliday junction (HJ) DNA during genetic recombination and DNA repair, while the RuvA-RuvB complex plays an important role in the rescue of blocked DNA replication forks via replication fork reversal (RFR). RuvA specifically binds to HJ cruciform DNA, conferring on it an open structure. The RuvB hexamer acts as an ATP-dependent pump, pulling dsDNA into and through the RuvAB complex. HJ branch migration allows RuvC to scan DNA until it finds its consensus sequence, where it cleaves and resolves the cruciform DNA. This Cereibacter sphaeroides (strain KD131 / KCTC 12085) (Rhodobacter sphaeroides) protein is Holliday junction branch migration complex subunit RuvA.